Consider the following 194-residue polypeptide: CASP-like protein 1D1 (194 aa).

The segment covering 1-16 has biased composition (basic and acidic residues); the sequence is MGSDETKSTLDTERST. The interval 1 to 23 is disordered; the sequence is MGSDETKSTLDTERSTVPRTGTT. The Cytoplasmic portion of the chain corresponds to 1–31; the sequence is MGSDETKSTLDTERSTVPRTGTTTKSCSITQ. Residues 32-52 form a helical membrane-spanning segment; the sequence is VVLRFVLFAATLTSIVVMVTS. Residues 53–77 lie on the Extracellular side of the membrane; sequence KQTKNIFIPGTPIRIPAAKFTNSPA. Residues 78 to 98 form a helical membrane-spanning segment; that stretch reads LIYFVVALSVACFYSIVSTFV. Topologically, residues 99-109 are cytoplasmic; it reads TVSAFKKHSCS. A helical membrane pass occupies residues 110-130; the sequence is AILLLNLAIMDAVMVGIVASA. The Extracellular portion of the chain corresponds to 131 to 163; it reads TGAGGGVAYLGLKGNKEVRWGKICNIYDKFCRH. A helical membrane pass occupies residues 164-184; that stretch reads VGGAIAVSLFASVILLLLSII. The Cytoplasmic segment spans residues 185 to 194; that stretch reads SVLSLYKKIR.

Belongs to the Casparian strip membrane proteins (CASP) family. As to quaternary structure, homodimer and heterodimers.

The protein resides in the cell membrane. The sequence is that of CASP-like protein 1D1 from Arabidopsis lyrata subsp. lyrata (Lyre-leaved rock-cress).